Reading from the N-terminus, the 2343-residue chain is MQVELYTCCFLCLLPFSLSATRKYYLGAVELSWDYMQSDLLSALHADTSFSSRVPGSLPLTTSVTYRKTVFVEFTDDLFNIAKPRPPWMGLLGPTIQAEVYDTVVIVLKNMASHPVSLHAVGVSYWKASEGAEYEDQTSQKEKEDDNVIPGESHTYVWQVLKENGPMASDPPCLTYSYFSHVDLVKDLNSGLIGALLVCKEGSLAKERTQTLQEFVLLFAVFDEGKSWHSETNASLTQAEAQHELHTINGYVNRSLPGLTVCHKRSVYWHVIGMGTTPEVHSIFLEGHTFLVRNHRQASLEISPITFLTAQTFLMDLGQFLLFCHIPSHQHDGMEAYVKVDSCPEEPQLRMKNNEDKDYDDGLYDSDMDVVSFDDDSSSPFIQIRSVAKKHPKTWVHYIAAEEEDWDYAPSGPTPNDRSHKNLYLNNGPQRIGKKYKKVRFVAYTDETFKTREAIQYESGILGPLLYGEVGDTLLIIFKNQASRPYNIYPHGINYVTPLHTGRLPKGVKHLKDMPILPGEIFKYKWTVTVEDGPTKSDPRCLTRYYSSFINLERDLASGLIGPLLICYKESVDQRGNQMMSDKRNVILFSVFDENRSWYLTENMQRFLPNADVVQPHDPEFQLSNIMHSINGYVFDNLQLSVCLHEVAYWYILSVGAQTDFLSVFFSGYTFKHKMVYEDTLTLFPFSGETVFMSMENPGLWVLGCHNSDFRNRGMTALLKVSSCNRNIDDYYEDTYEDIPTPLLNENNVIKPRSFSQNSRHPSTKEKQLKATTTPENDIEKIDLQSGERTQLIKAQSVSSSDLLMLLGQNPTPRGLFLSDLREATDRADDHSRGAIERNKGPPEVASLRPELRHSEDREFTPEPELQLRLNENLGTNTTVELKKLDLKISSSSDSLMTSPTIPSDKLAAATEKTGSLGPPNMSVHFNSHLGTIVFGNNSSHLIQSGVPLELSEEDNDSKLLEAPLMNIQESSLRENVLSMESNRLFKEERIRGPASLIKDNALFKVNISSVKTNRAPVNLTTNRKTRVAIPTLLIENSTSVWQDIMLERNTEFKEVTSLIHNETFMDRNTTALGLNHVSNKTTLSKNVEMAHQKKEDPVPLRAENPDLSSSKIPFLPDWIKTHGKNSLSSEQRPSPKQLTSLGSEKSVKDQNFLSEEKVVVGEDEFTKDTELQEIFPNNKSIFFANLANVQENDTYNQEKKSPEEIERKEKLTQENVALPQAHTMIGTKNFLKNLFLLSTKQNVAGLEEQPYTPILQDTRSLNDSPHSEGIHMANFSKIREEANLEGLGNQTNQMVERFPSTTRMSSNASQHVITQRGKRSLKQPRLSQGEIKFERKVIANDTSTQWSKNMNYLAQGTLTQIEYNEKEKRAITQSPLSDCSMRNHVTIQMNDSALPVAKESASPSVRHTDLTKIPSQHNSSHLPASACNYTFRERTSGVQEGSHFLQEAKRNNLSLAFVTLGITEGQGKFSSLGKSATNQPMYKKLENTVLLQPGLSETSDKVELLSQVHVDQEDSFPTKTSNDSPGHLDLMGKIFLQKTQGPVKMNKTNSPGKVPFLKWATESSEKIPSKLLGVLAWDNHYDTQIPSEEWKSQKKSQTNTAFKRKDTILPLGPCENNDSTAAINEGQDKPQREAMWAKQGEPGRLCSQNPPVSKHHQREITVTTLQPEEDKFEYDDTFSIEMKREDFDIYGDYENQGLRSFQKKTRHYFIAAVERLWDYGMSRSPHILRNRAQSGDVQQFKKVVFQEFTDGSFTQPLYRGELNEHLGLLGPYIRAEVEDNIVVTFKNQASRPYSFYSSLISYDEDEGQGAEPRRKFVNPNETKIYFWKVQHHMAPTKDEFDCKAWAYFSDVDLEKDVHSGLIGPLLICRSNTLNPAHGRQVTVQEFALVFTIFDETKSWYFTENLERNCRAPCNVQKEDPTLKENFRFHAINGYVKDTLPGLVMAQDQKVRWYLLSMGSNENIHSIHFSGHVFTVRKKEEYKMAVYNLYPGVFETVEMLPSQVGIWRIECLIGEHLQAGMSTLFLVYSKKCQTPLGMASGHIRDFQITASGQYGQWAPKLARLHYSGSINAWSTKDPFSWIKVDLLAPMIIHGIMTQGARQKFSSLYVSQFIIMYSLDGNKWHSYRGNSTGTLMVFFGNVDSSGIKHNIFNPPIIAQYIRLHPTHYSIRSTLRMELLGCDFNSCSMPLGMESKAISDAQITASSYLSSMLATWSPSQARLHLQGRTNAWRPQANNPKEWLQVDFRKTMKVTGITTQGVKSLLISMYVKEFLISSSQDGHNWTLFLQNGKVKVFQGNRDSSTPVRNRLEPPLVARYVRLHPQSWAHHIALRLEVLGCDTQQPA.

The first 19 residues, 1-19 (MQVELYTCCFLCLLPFSLS), serve as a signal peptide directing secretion. Plastocyanin-like domains are found at residues 20-199 (ATRK…LLVC) and 207-343 (ERTQ…VDSC). Residues 20–343 (ATRKYYLGAV…MEAYVKVDSC (324 aa)) form the F5/8 type A 1 domain. 2 N-linked (GlcNAc...) asparagine glycosylation sites follow: asparagine 233 and asparagine 253. 2 positions are modified to sulfotyrosine: tyrosine 359 and tyrosine 408. Plastocyanin-like domains are found at residues 393–567 (KTWV…LLIC) and 577–724 (NQMM…VSSC). One can recognise an F5/8 type A 2 domain in the interval 393-724 (KTWVHYIAAE…MTALLKVSSC (332 aa)). Asparagine 595 is a glycosylation site (N-linked (GlcNAc...) asparagine). Residues tyrosine 731, tyrosine 732, and tyrosine 736 each carry the sulfotyrosine modification. The span at 752-761 (PRSFSQNSRH) shows a compositional bias: polar residues. Disordered stretches follow at residues 752–774 (PRSF…ATTT) and 828–865 (ADDH…PEPE). Residues 754-1659 (SFSQNSRHPS…NPPVSKHHQR (906 aa)) form a b region. Basic and acidic residues-rich tracts occupy residues 828–841 (ADDH…RNKG) and 850–861 (PELRHSEDREFT). 11 N-linked (GlcNAc...) asparagine glycosylation sites follow: asparagine 877, asparagine 921, asparagine 937, asparagine 938, asparagine 956, asparagine 1007, asparagine 1019, asparagine 1037, asparagine 1062, asparagine 1069, and asparagine 1080. Positions 1124-1147 (GKNSLSSEQRPSPKQLTSLGSEKS) are disordered. The segment covering 1125–1147 (KNSLSSEQRPSPKQLTSLGSEKS) has biased composition (polar residues). Residues asparagine 1179, asparagine 1193, asparagine 1275, asparagine 1290, asparagine 1308, asparagine 1341, asparagine 1391, asparagine 1419, asparagine 1429, asparagine 1453, asparagine 1547, and asparagine 1618 are each glycosylated (N-linked (GlcNAc...) asparagine). Over residues 1302-1314 (TTRMSSNASQHVI) the composition is skewed to polar residues. The disordered stretch occupies residues 1302-1326 (TTRMSSNASQHVITQRGKRSLKQPR). The segment at 1592 to 1632 (KSQKKSQTNTAFKRKDTILPLGPCENNDSTAAINEGQDKPQ) is disordered. Sulfotyrosine is present on residues tyrosine 1675 and tyrosine 1691. 2 consecutive Plastocyanin-like domains span residues 1705–1869 (KTRH…LLIC) and 1879–2032 (GRQV…SKKC). One can recognise an F5/8 type A 3 domain in the interval 1705–2032 (KTRHYFIAAV…TLFLVYSKKC (328 aa)). Asparagine 1821 is a glycosylation site (N-linked (GlcNAc...) asparagine). F5/8 type C domains follow at residues 2032 to 2180 (CQTP…LLGC) and 2185 to 2337 (CSMP…VLGC). 2 disulfides stabilise this stretch: cysteine 2032–cysteine 2180 and cysteine 2185–cysteine 2337. N-linked (GlcNAc...) asparagine glycans are attached at residues asparagine 2129 and asparagine 2281.

Belongs to the multicopper oxidase family. In terms of assembly, interacts with vWF. vWF binding is essential for the stabilization of F8 in circulation. In terms of processing, proteolytically cleaved by cathepsin CTSG to produce a partially activated form.

The protein resides in the secreted. It is found in the extracellular space. Factor VIII, along with calcium and phospholipid, acts as a cofactor for factor IXa when it converts factor X to the activated form, factor Xa. The protein is Coagulation factor VIII (F8) of Canis lupus familiaris (Dog).